We begin with the raw amino-acid sequence, 236 residues long: Small ribosomal subunit protein uS3 (236 aa).

Positions 39 to 107 constitute a KH type-2 domain; the sequence is IREFLTEELK…DTSLNIVEVR (69 aa). The segment at 214–236 is disordered; that stretch reads ASERRAVEGDNQGSSSNRRRENA.

The protein belongs to the universal ribosomal protein uS3 family. As to quaternary structure, part of the 30S ribosomal subunit. Forms a tight complex with proteins S10 and S14.

Binds the lower part of the 30S subunit head. Binds mRNA in the 70S ribosome, positioning it for translation. The sequence is that of Small ribosomal subunit protein uS3 from Brucella melitensis biotype 1 (strain ATCC 23456 / CCUG 17765 / NCTC 10094 / 16M).